The following is a 196-amino-acid chain: Large ribosomal subunit protein uL5 (196 aa).

The protein belongs to the universal ribosomal protein uL5 family. Part of the 50S ribosomal subunit; part of the 5S rRNA/L5/L18/L25 subcomplex. Contacts the 5S rRNA and the P site tRNA. Forms a bridge to the 30S subunit in the 70S ribosome.

In terms of biological role, this is one of the proteins that bind and probably mediate the attachment of the 5S RNA into the large ribosomal subunit, where it forms part of the central protuberance. In the 70S ribosome it contacts protein S13 of the 30S subunit (bridge B1b), connecting the 2 subunits; this bridge is implicated in subunit movement. Contacts the P site tRNA; the 5S rRNA and some of its associated proteins might help stabilize positioning of ribosome-bound tRNAs. The sequence is that of Large ribosomal subunit protein uL5 from Acidothermus cellulolyticus (strain ATCC 43068 / DSM 8971 / 11B).